Consider the following 262-residue polypeptide: Capsid protein (262 aa).

Positions 183–262 are disordered; the sequence is APTIEAITRP…SHHRSPSPRK (80 aa). A Bipartite nuclear localization signal motif is present at residues 215-233; the sequence is RRRKVKTTVVYGRRRSKSR. 2 stretches are compositionally biased toward basic residues: residues 215 to 234 and 252 to 262; these read RRRKVKTTVVYGRRRSKSRE and SSHHRSPSPRK.

Belongs to the avihepadnavirus core antigen family. Homodimerizes, then multimerizes.

It is found in the virion. The protein resides in the host cytoplasm. Its function is as follows. Self assembles to form an icosahedral capsid. Most capsid appear to be large particles with an icosahedral symmetry of T=4 and consist of 240 copies of capsid protein, though a fraction forms smaller T=3 particles consisting of 180 capsid proteins. Entering capsid are transported along microtubules to the nucleus. Phosphorylation of the capsid is thought to induce exposure of nuclear localization signal in the C-terminal portion of the capsid protein that allows binding to the nuclear pore complex via the importin (karyopherin-) alpha and beta. Capsids are imported in intact form through the nuclear pore into the nuclear basket, where it probably binds NUP153. Only capsids that contain the mature viral genome can release the viral DNA and capsid protein into the nucleoplasm. Immature capsids get stucked in the basket. Capsids encapsulate the pre-genomic RNA and the P protein. Pre-genomic RNA is reverse transcribed into DNA while the capsid is still in the cytoplasm. The capsid can then either be directed to the nucleus, providing more genome for transcription, or bud through the endoplasmic reticulum to provide new virions. In Duck hepatitis B virus (isolate Shanghai/DHBVQCA34) (DHBV), this protein is Capsid protein (C).